Reading from the N-terminus, the 279-residue chain is F420-dependent methylenetetrahydromethanopterin dehydrogenase (279 aa).

The protein belongs to the MTD family.

It carries out the reaction 5,10-methylenetetrahydromethanopterin + oxidized coenzyme F420-(gamma-L-Glu)(n) + 2 H(+) = 5,10-methenyl-5,6,7,8-tetrahydromethanopterin + reduced coenzyme F420-(gamma-L-Glu)(n). Its pathway is one-carbon metabolism; methanogenesis from CO(2); 5,10-methylene-5,6,7,8-tetrahydromethanopterin from 5,10-methenyl-5,6,7,8-tetrahydromethanopterin (coenzyme F420 route): step 1/1. In terms of biological role, catalyzes the reversible reduction of methenyl-H(4)MPT(+) to methylene-H(4)MPT. This chain is F420-dependent methylenetetrahydromethanopterin dehydrogenase (mtd), found in Methanosarcina mazei (strain ATCC BAA-159 / DSM 3647 / Goe1 / Go1 / JCM 11833 / OCM 88) (Methanosarcina frisia).